Consider the following 172-residue polypeptide: Protein 3 (172 aa).

The protein is Protein 3 (3) of Northern cereal mosaic virus (NCMV).